Here is a 574-residue protein sequence, read N- to C-terminus: NEDD4-binding protein 2-like 2 (574 aa).

Disordered stretches follow at residues 82–110 (HKEM…LAPA), 127–161 (YKPP…QKFN), 182–204 (ENEN…QTLS), and 542–574 (TQKS…TDDY). Basic and acidic residues-rich tracts occupy residues 129–141 (PPEK…RKNE) and 149–161 (DSKR…QKFN). Positions 162 to 196 (SKKLEIDTELSQFYKEIEELENENEASQGSCKEPE) form a coiled coil. Polar residues predominate over residues 563–574 (GSHSQVSITDDY).

In Rattus norvegicus (Rat), this protein is NEDD4-binding protein 2-like 2 (N4bp2l2).